Consider the following 551-residue polypeptide: Mesoderm induction early response protein 3 (551 aa).

Low complexity predominate over residues M1 to S16. Disordered stretches follow at residues M1–G62 and L113–P169. Residues S17–E36 are compositionally biased toward basic and acidic residues. A phosphoserine mark is found at S52, S53, and S114. Over residues Q121–H134 the composition is skewed to polar residues. The span at K154 to T163 shows a compositional bias: acidic residues. At S156 the chain carries Phosphoserine. Residue T163 is modified to Phosphothreonine. Residues S165 and S168 each carry the phosphoserine modification. In terms of domain architecture, ELM2 spans R174–G273. The region spanning E278–R330 is the SANT domain.

It localises to the nucleus. In terms of biological role, transcriptional repressor. The sequence is that of Mesoderm induction early response protein 3 (Mier3) from Mus musculus (Mouse).